Consider the following 117-residue polypeptide: Large ribosomal subunit protein uL18 (117 aa).

This sequence belongs to the universal ribosomal protein uL18 family. In terms of assembly, part of the 50S ribosomal subunit; part of the 5S rRNA/L5/L18/L25 subcomplex. Contacts the 5S and 23S rRNAs.

Functionally, this is one of the proteins that bind and probably mediate the attachment of the 5S RNA into the large ribosomal subunit, where it forms part of the central protuberance. The sequence is that of Large ribosomal subunit protein uL18 from Chromobacterium violaceum (strain ATCC 12472 / DSM 30191 / JCM 1249 / CCUG 213 / NBRC 12614 / NCIMB 9131 / NCTC 9757 / MK).